Reading from the N-terminus, the 2581-residue chain is Chromodomain-helicase-DNA-binding protein 8 (2581 aa).

Disordered regions lie at residues 22-114 (DDSF…QTST), 253-281 (VKGSAPAGNPGATGPPLKPAVTLTSTPAQ), and 349-375 (QKIQIVPQPPSSQPQPQPPPSAQPLTL). Composition is skewed to polar residues over residues 42–64 (SLDSLDQMNQDGGSGDVGNSSAS) and 94–114 (DYTTQPTSQEQPAQPVLQTST). A compositionally biased stretch (low complexity) spans 255 to 267 (GSAPAGNPGATGP). Residues 355–370 (PQPPSSQPQPQPPPSA) show a composition bias toward pro residues. Ser-432 carries the phosphoserine modification. Disordered regions lie at residues 473–584 (RARG…KRKK) and 596–616 (DEEEEEVDVTGPIKPEPILPE). Positions 493 to 516 (RPEEEGEKKRRKKSSGERLKEEKP) are enriched in basic and acidic residues. A phosphoserine mark is found at Ser-553 and Ser-562. A compositionally biased stretch (basic residues) spans 572-584 (QKRRSNRQVKRKK). Residue Lys-609 forms a Glycyl lysine isopeptide (Lys-Gly) (interchain with G-Cter in SUMO) linkage. Chromo domains are found at residues 642 to 709 (AIVD…AQMR) and 724 to 790 (VEVD…RVNR). The Helicase ATP-binding domain occupies 823-997 (LFNWYNRQNC…FSLLHFLEPS (175 aa)). 836–843 (DEMGLGKT) is a binding site for ATP. A DEAH box motif is present at residues 948–951 (DEAH). Residues 1137–1288 (LIDKLLPKLK…KAVLQSMSGR (152 aa)) form the Helicase C-terminal domain. Phosphoserine is present on residues Ser-1420 and Ser-1424. The interval 1692 to 1713 (EDPEYKPLQGPPKDPDDEGDPL) is disordered. The tract at residues 1789–2302 (IARREKQQRW…LVELEVECME (514 aa)) is interaction with FAM124B. Residues Ser-1976 and Ser-1978 each carry the phosphoserine modification. Residues 1988-2016 (QCTSRTASPSPLRPDVPAEKSPEENAVQV) form a disordered region. Residue Thr-1993 is modified to Phosphothreonine. 3 positions are modified to phosphoserine: Ser-1995, Ser-1997, and Ser-2008. A Glycyl lysine isopeptide (Lys-Gly) (interchain with G-Cter in SUMO2) cross-link involves residue Lys-2025. Disordered regions lie at residues 2047–2118 (SSDT…YDEE) and 2179–2221 (NRRS…SSSA). A compositionally biased stretch (acidic residues) spans 2063–2072 (EDDDDSDSEL). 2 positions are modified to phosphoserine: Ser-2068 and Ser-2070. Residues 2075–2094 (SKLSPSSSSSSSSSSSSSSS) show a composition bias toward low complexity. Residues 2102 to 2116 (EEKLTADRSRPKLYD) show a composition bias toward basic and acidic residues. A phosphoserine mark is found at Ser-2182, Ser-2200, and Ser-2202. At Thr-2204 the chain carries Phosphothreonine. At Ser-2211 the chain carries Phosphoserine. Position 2215 is a phosphothreonine (Thr-2215). Ser-2223 bears the Phosphoserine mark. Lys-2256 participates in a covalent cross-link: Glycyl lysine isopeptide (Lys-Gly) (interchain with G-Cter in SUMO2). The disordered stretch occupies residues 2484 to 2581 (PHVDSSTMLH…NSDSSDDADD (98 aa)). Positions 2492-2510 (LHHHHHHPHPHHHHHHHPG) are enriched in basic residues. The span at 2513–2528 (TTGYPSSPATTTSGTA) shows a compositional bias: low complexity. Ser-2519 is modified (phosphoserine). The segment covering 2537 to 2550 (EDDDEEEDEDDDDL) has biased composition (acidic residues). Over residues 2565–2574 (DDPMMPANSD) the composition is skewed to low complexity.

This sequence belongs to the SNF2/RAD54 helicase family. CHD8 subfamily. As to quaternary structure, interacts with p53/TP53, histone H1 and CTCF. Component of some MLL1/MLL complex, at least composed of the core components KMT2A/MLL1, ASH2L, HCFC1/HCF1, WDR5 and RBBP5, as well as the facultative components BACC1, CHD8, E2F6, HSP70, INO80C, KANSL1, LAS1L, MAX, MCRS1, MGA, KAT8/MOF, PELP1, PHF20, PRP31, RING2, RUVB1/TIP49A, RUVB2/TIP49B, SENP3, TAF1, TAF4, TAF6, TAF7, TAF9 and TEX10. Interacts with CHD7. Interacts with FAM124B. Interacts with CTNNB1. Interacts with PIAS3. Interacts with TLK2. Interacts with HNRNPL in an RNA-dependent manner. In terms of processing, sumoylated.

The protein resides in the nucleus. The catalysed reaction is ATP + H2O = ADP + phosphate + H(+). In terms of biological role, ATP-dependent chromatin-remodeling factor, it slides nucleosomes along DNA; nucleosome sliding requires ATP. Acts as a transcription repressor by remodeling chromatin structure and recruiting histone H1 to target genes. Suppresses p53/TP53-mediated apoptosis by recruiting histone H1 and preventing p53/TP53 transactivation activity. Acts as a negative regulator of Wnt signaling pathway by regulating beta-catenin (CTNNB1) activity. Negatively regulates CTNNB1-targeted gene expression by being recruited specifically to the promoter regions of several CTNNB1 responsive genes. Involved in both enhancer blocking and epigenetic remodeling at chromatin boundary via its interaction with CTCF. Acts as a suppressor of STAT3 activity by suppressing the LIF-induced STAT3 transcriptional activity. Also acts as a transcription activator via its interaction with ZNF143 by participating in efficient U6 RNA polymerase III transcription. Regulates alternative splicing of a core group of genes involved in neuronal differentiation, cell cycle and DNA repair. Enables H3K36me3-coupled transcription elongation and co-transcriptional RNA processing likely via interaction with HNRNPL. This chain is Chromodomain-helicase-DNA-binding protein 8, found in Rattus norvegicus (Rat).